We begin with the raw amino-acid sequence, 635 residues long: 1-deoxy-D-xylulose-5-phosphate synthase (635 aa).

Thiamine diphosphate is bound by residues H74 and 115–117; that span reads AHS. D146 serves as a coordination point for Mg(2+). Thiamine diphosphate-binding positions include 147 to 148, N176, Y283, and E365; that span reads GA. Mg(2+) is bound at residue N176.

The protein belongs to the transketolase family. DXPS subfamily. As to quaternary structure, homodimer. Mg(2+) serves as cofactor. Thiamine diphosphate is required as a cofactor.

It carries out the reaction D-glyceraldehyde 3-phosphate + pyruvate + H(+) = 1-deoxy-D-xylulose 5-phosphate + CO2. It functions in the pathway metabolic intermediate biosynthesis; 1-deoxy-D-xylulose 5-phosphate biosynthesis; 1-deoxy-D-xylulose 5-phosphate from D-glyceraldehyde 3-phosphate and pyruvate: step 1/1. In terms of biological role, catalyzes the acyloin condensation reaction between C atoms 2 and 3 of pyruvate and glyceraldehyde 3-phosphate to yield 1-deoxy-D-xylulose-5-phosphate (DXP). The protein is 1-deoxy-D-xylulose-5-phosphate synthase of Polaromonas sp. (strain JS666 / ATCC BAA-500).